The chain runs to 85 residues: Small ribosomal subunit protein bS16 (85 aa).

The protein belongs to the bacterial ribosomal protein bS16 family.

The polypeptide is Small ribosomal subunit protein bS16 (Xanthomonas euvesicatoria pv. vesicatoria (strain 85-10) (Xanthomonas campestris pv. vesicatoria)).